The sequence spans 308 residues: MKILLTGAGGMVGKNILAHTKSKDYEFITPSSKELDLLEKKHITTYLKHHKPNFIIHAAGIVGGIHANINNPVKFLVENMQMGINLLTAAKDNNIRKLLNLGSSCMYPKDCDSGLTEDMILTGELESTNEGYALAKITSAKLCEYINREDSEFQYKTAIPCNLYGKYDKFDENNSHMIPAVIKKIVTAIETGKSEVEIWGDGEARREFMYAEDLADFIFYTINNFTKMPQNINVGLGQDYTITEYYKVIAKILGYKGTFVYDKSKPVGMRRKLIDNTLLSEFGWSNKVDLESGISKTCQYFLNEKNND.

NADP(+) is bound by residues Gly7 to Gly13 and Leu101 to Ser104. The Proton donor/acceptor role is filled by Tyr132. NADP(+) is bound by residues Lys136, Pro160–Leu163, and His176. Substrate-binding residues include Lys184, Trp199, and Arg206.

This sequence belongs to the NAD(P)-dependent epimerase/dehydratase family. Fucose synthase subfamily. In terms of assembly, homodimer.

It catalyses the reaction GDP-beta-L-colitose + NAD(+) = GDP-4-dehydro-3,6-dideoxy-alpha-D-mannose + NADH + H(+). The enzyme catalyses GDP-beta-L-colitose + NADP(+) = GDP-4-dehydro-3,6-dideoxy-alpha-D-mannose + NADPH + H(+). The protein operates within nucleotide-sugar metabolism; GDP-L-colitose biosynthesis. Functionally, involved in the biosynthesis of the L-colitose (3,6-dideoxyl-L-xylo-hexose) present in the O-antigen region of lipopolysaccharides (LPS) where it serves as antigenic determinant and are vital for bacterial defense and survival. Catalyzes the two-step NADP-dependent conversion of GDP-4-keto-3,6-dideoxy-D-mannose to GDP-L-colitose. ColC is a bifunctional enzyme catalyzing the C-5 epimerization of GDP-4-keto-3,6-dideoxy-D-mannose and the subsequent C-4 keto reduction of the resulting L-epimer to give GDP-L-colitose. It can use both NADP(+) and NAD(+) as electron acceptor, with a slight preference for NADP(+). In Yersinia pseudotuberculosis, this protein is GDP-L-colitose synthase.